The sequence spans 357 residues: Aspartate-semialdehyde dehydrogenase (357 aa).

8 residues coordinate NADP(+): Thr-12, Gly-13, Thr-14, Val-15, Ser-37, Ser-40, Leu-84, and Asp-85. Cys-151 (acyl-thioester intermediate) is an active-site residue. Gly-183 contributes to the NADP(+) binding site. Residue His-247 is the Proton acceptor of the active site. Position 323 is a phosphoserine (Ser-323). Asn-335 is a binding site for NADP(+).

It belongs to the aspartate-semialdehyde dehydrogenase family.

It localises to the cytoplasm. Its subcellular location is the cytosol. The protein resides in the nucleus. It catalyses the reaction L-aspartate 4-semialdehyde + phosphate + NADP(+) = 4-phospho-L-aspartate + NADPH + H(+). It participates in amino-acid biosynthesis; L-methionine biosynthesis via de novo pathway; L-homoserine from L-aspartate: step 2/3. Its pathway is amino-acid biosynthesis; L-threonine biosynthesis; L-threonine from L-aspartate: step 2/5. Its function is as follows. Catalyzes the NADPH-dependent formation of L-aspartate 4-semialdehyde (L-ASA) by the reductive dephosphorylation of 4-phospho-L-aspartate. Mediates the second step in the biosynthesis of amino acids that derive from aspartate (the aspartate family of amino acids), including methioinine and threonine, the latter of which is a precursor to isoleucine. The chain is Aspartate-semialdehyde dehydrogenase from Schizosaccharomyces pombe (strain 972 / ATCC 24843) (Fission yeast).